Consider the following 507-residue polypeptide: ATP synthase subunit alpha, chloroplastic (507 aa).

170–177 (GDRQTGKT) is a binding site for ATP.

This sequence belongs to the ATPase alpha/beta chains family. F-type ATPases have 2 components, CF(1) - the catalytic core - and CF(0) - the membrane proton channel. CF(1) has five subunits: alpha(3), beta(3), gamma(1), delta(1), epsilon(1). CF(0) has four main subunits: a, b, b' and c.

It localises to the plastid. The protein resides in the chloroplast thylakoid membrane. It catalyses the reaction ATP + H2O + 4 H(+)(in) = ADP + phosphate + 5 H(+)(out). Functionally, produces ATP from ADP in the presence of a proton gradient across the membrane. The alpha chain is a regulatory subunit. The polypeptide is ATP synthase subunit alpha, chloroplastic (Oryza nivara (Indian wild rice)).